An 837-amino-acid polypeptide reads, in one-letter code: Striatin-interacting protein 1 (837 aa).

Met1 carries the N-acetylmethionine modification. Disordered stretches follow at residues 1–67 (MEPA…ESPD) and 333–423 (AASP…KGLP). Positions 18 to 35 (PQPPPPPPPATAQPPPGA) are enriched in pro residues. Positions 47–60 (KAREFNRNQRKDSE) are enriched in basic and acidic residues. Residues Ser59, Ser335, and Ser339 each carry the phosphoserine modification. The span at 356 to 377 (KALIKQDNLDAFNERDPYKADD) shows a compositional bias: basic and acidic residues. A compositionally biased stretch (acidic residues) spans 378-391 (SREEEEENDDDSSL). Ser788 is subject to Phosphoserine. The tract at residues 796-837 (DNCLQSVLGQRVDLPEDFQMNYDLWLEREVFSKPISWEELLQ) is required for STRIPAK core complex formation.

This sequence belongs to the STRIP family. Part of the core of STRIPAK complexes composed of PP2A catalytic and scaffolding subunits, the striatins (PP2A regulatory subunits), the striatin-associated proteins MOB4, STRIP1 and STRIP2, PDCD10 and members of the STE20 kinases, such as STK24 and STK26. The STRIPAK complex can be extended by adapter proteins such as SLMAP:SIKE1, CTTNBP2 or CTTNBP2NL. Interacts with CDC42BPB. Interacts with CTTNBP2NL.

Its subcellular location is the cytoplasm. Functionally, plays a role in the regulation of cell morphology and cytoskeletal organization. Required in the cortical actin filament dynamics and cell shape. Part of the striatin-interacting phosphatase and kinase (STRIPAK) complexes. STRIPAK complexes have critical roles in protein (de)phosphorylation and are regulators of multiple signaling pathways including Hippo, MAPK, nuclear receptor and cytoskeleton remodeling. Different types of STRIPAK complexes are involved in a variety of biological processes such as cell growth, differentiation, apoptosis, metabolism and immune regulation. The protein is Striatin-interacting protein 1 (Strip1) of Mus musculus (Mouse).